Consider the following 257-residue polypeptide: uncharacterized protein (257 aa).

A helical membrane pass occupies residues 7 to 27 (IGILEIVVILSILITSVSLAY).

It localises to the membrane. This is an uncharacterized protein from Methanocaldococcus jannaschii (strain ATCC 43067 / DSM 2661 / JAL-1 / JCM 10045 / NBRC 100440) (Methanococcus jannaschii).